Reading from the N-terminus, the 289-residue chain is 2-dehydro-3-deoxyphosphooctonate aldolase (289 aa).

Belongs to the KdsA family.

The protein resides in the cytoplasm. The enzyme catalyses D-arabinose 5-phosphate + phosphoenolpyruvate + H2O = 3-deoxy-alpha-D-manno-2-octulosonate-8-phosphate + phosphate. It functions in the pathway carbohydrate biosynthesis; 3-deoxy-D-manno-octulosonate biosynthesis; 3-deoxy-D-manno-octulosonate from D-ribulose 5-phosphate: step 2/3. Its pathway is bacterial outer membrane biogenesis; lipopolysaccharide biosynthesis. The sequence is that of 2-dehydro-3-deoxyphosphooctonate aldolase from Cupriavidus taiwanensis (strain DSM 17343 / BCRC 17206 / CCUG 44338 / CIP 107171 / LMG 19424 / R1) (Ralstonia taiwanensis (strain LMG 19424)).